Reading from the N-terminus, the 341-residue chain is Phosphoribosylformylglycinamidine cyclo-ligase (341 aa).

This sequence belongs to the AIR synthase family.

The protein localises to the cytoplasm. The catalysed reaction is 2-formamido-N(1)-(5-O-phospho-beta-D-ribosyl)acetamidine + ATP = 5-amino-1-(5-phospho-beta-D-ribosyl)imidazole + ADP + phosphate + H(+). It functions in the pathway purine metabolism; IMP biosynthesis via de novo pathway; 5-amino-1-(5-phospho-D-ribosyl)imidazole from N(2)-formyl-N(1)-(5-phospho-D-ribosyl)glycinamide: step 2/2. The polypeptide is Phosphoribosylformylglycinamidine cyclo-ligase (Lachnospira eligens (strain ATCC 27750 / DSM 3376 / VPI C15-48 / C15-B4) (Eubacterium eligens)).